Consider the following 1080-residue polypeptide: Histone deacetylase 4 (1080 aa).

3 disordered regions span residues 1 to 25 (MSSQSHPDGLSGRDQPVELLNPPRV), 132 to 165 (KLEQHRQEQELEKQHREQKLQQLKNKEKGKESAV), and 205 to 312 (TQHS…ISAE). Residues 132-162 (KLEQHRQEQELEKQHREQKLQQLKNKEKGKE) are compositionally biased toward basic and acidic residues. A compositionally biased stretch (polar residues) spans 205–224 (TQHSSLDQSSPPQSGVSGTY). 2 stretches are compositionally biased toward basic and acidic residues: residues 233–244 (DSKDDFPLRKTA) and 258–273 (KVAERRSSPLLRRKDG). Positions 289–312 (SACNSAPGSGPSSPNNSSNNISAE) are enriched in low complexity. Positions 348–353 (PSLPNI) match the PxLPxI/L motif. 3 disordered regions span residues 506–527 (KPNEPARQHESHPEETEEELRE), 558–579 (EPIESDEEEAEPQQELESGQRQ), and 622–646 (PLSRAQSSPASATFPMSVQEPPTKP). The segment covering 509-527 (EPARQHESHPEETEEELRE) has biased composition (basic and acidic residues). Positions 560-571 (IESDEEEAEPQQ) are enriched in acidic residues. Residues 625–637 (RAQSSPASATFPM) show a composition bias toward polar residues. Residues 651 to 1080 (GLVYDTLMLK…DEPMEEEPPL (430 aa)) are histone deacetylase. Zn(2+)-binding residues include Cys663, Cys665, His671, and Cys747. His799 is an active-site residue. The tract at residues 1055-1080 (MASLSVGVKPAEKRPDDEPMEEEPPL) is disordered.

This sequence belongs to the histone deacetylase family. HD type 2 subfamily.

Its subcellular location is the nucleus. It carries out the reaction N(6)-acetyl-L-lysyl-[histone] + H2O = L-lysyl-[histone] + acetate. Its function is as follows. Responsible for the deacetylation of lysine residues on the N-terminal part of the core histones (H2A, H2B, H3 and H4). Histone deacetylation gives a tag for epigenetic repression and plays an important role in transcriptional regulation, cell cycle progression and developmental events. Histone deacetylases act via the formation of large multiprotein complexes. The chain is Histone deacetylase 4 (HDAC4) from Gallus gallus (Chicken).